We begin with the raw amino-acid sequence, 51 residues long: ATP synthase protein 8 (51 aa).

Residues 7–27 (LNWAMMTIMFSLSLLVSMIIL) traverse the membrane as a helical segment.

This sequence belongs to the ATPase protein 8 family. F-type ATPases have 2 components, CF(1) - the catalytic core - and CF(0) - the membrane proton channel.

It is found in the mitochondrion membrane. In terms of biological role, mitochondrial membrane ATP synthase (F(1)F(0) ATP synthase or Complex V) produces ATP from ADP in the presence of a proton gradient across the membrane which is generated by electron transport complexes of the respiratory chain. F-type ATPases consist of two structural domains, F(1) - containing the extramembraneous catalytic core and F(0) - containing the membrane proton channel, linked together by a central stalk and a peripheral stalk. During catalysis, ATP synthesis in the catalytic domain of F(1) is coupled via a rotary mechanism of the central stalk subunits to proton translocation. Part of the complex F(0) domain. Minor subunit located with subunit a in the membrane. The protein is ATP synthase protein 8 (MT-ATP8) of Limulus polyphemus (Atlantic horseshoe crab).